The chain runs to 290 residues: Agroclavine dehydrogenase (290 aa).

It belongs to the fgaFS/easG family. In terms of assembly, monomer.

The catalysed reaction is agroclavine + NADP(+) = didehydroagroclavine + NADPH + H(+). It functions in the pathway alkaloid biosynthesis; ergot alkaloid biosynthesis. Functionally, agroclavine dehydrogenase; part of the gene cluster that mediates the biosynthesis of fungal ergot alkaloid. DmaW catalyzes the first step of ergot alkaloid biosynthesis by condensing dimethylallyl diphosphate (DMAP) and tryptophan to form 4-dimethylallyl-L-tryptophan. The second step is catalyzed by the methyltransferase easF that methylates 4-dimethylallyl-L-tryptophan in the presence of S-adenosyl-L-methionine, resulting in the formation of 4-dimethylallyl-L-abrine. The catalase easC and the FAD-dependent oxidoreductase easE then transform 4-dimethylallyl-L-abrine to chanoclavine-I which is further oxidized by easD in the presence of NAD(+), resulting in the formation of chanoclavine-I aldehyde. Agroclavine dehydrogenase easG then mediates the conversion of chanoclavine-I aldehyde to agroclavine via a non-enzymatic adduct reaction: the substrate is an iminium intermediate that is formed spontaneously from chanoclavine-I aldehyde in the presence of glutathione. The presence of easA is not required to complete this reaction. Further conversion of agroclavine to paspalic acid is a two-step process involving oxidation of agroclavine to elymoclavine and of elymoclavine to paspalic acid, the second step being performed by the elymoclavine oxidase cloA. Paspalic acid is then further converted to D-lysergic acid. Ergopeptines are assembled from D-lysergic acid and three different amino acids by the D-lysergyl-peptide-synthetases composed each of a monomudular and a trimodular nonribosomal peptide synthetase subunit. LpsB and lpsC encode the monomodular subunits responsible for D-lysergic acid activation and incorporation into the ergopeptine backbone. LpsA1 and A2 subunits encode the trimodular nonribosomal peptide synthetase assembling the tripeptide portion of ergopeptines. LpsA1 is responsible for formation of the major ergopeptine, ergotamine, and lpsA2 for alpha-ergocryptine, the minor ergopeptine of the total alkaloid mixture elaborated by C.purpurea. D-lysergyl-tripeptides are assembled by the nonribosomal peptide synthetases and released as N-(D-lysergyl-aminoacyl)-lactams. Cyclolization of the D-lysergyl-tripeptides is performed by the Fe(2+)/2-ketoglutarate-dependent dioxygenase easH which introduces a hydroxyl group into N-(D-lysergyl-aminoacyl)-lactam at alpha-C of the aminoacyl residue followed by spontaneous condensation with the terminal lactam carbonyl group. The polypeptide is Agroclavine dehydrogenase (Claviceps purpurea (Ergot fungus)).